Here is a 353-residue protein sequence, read N- to C-terminus: UPF0283 membrane protein YcjF (353 aa).

A run of 3 helical transmembrane segments spans residues 70-90, 100-120, and 213-233; these read MVMG…VQWT, VALG…GSVV, and ESTL…FIAW.

Belongs to the UPF0283 family.

It localises to the cell inner membrane. In Shigella boydii serotype 4 (strain Sb227), this protein is UPF0283 membrane protein YcjF.